The primary structure comprises 535 residues: Flavonoid 3'-monooxygenase CYP75B4 (535 aa).

A helical membrane pass occupies residues 8–28 (ISTSLLLTTVALSVIVCYALV). Residue Cys469 participates in heme binding.

The protein belongs to the cytochrome P450 family. Requires heme as cofactor.

It is found in the membrane. The catalysed reaction is a 3'-unsubstituted flavone + reduced [NADPH--hemoprotein reductase] + O2 = a 3'-hydroxyflavone + oxidized [NADPH--hemoprotein reductase] + H2O + H(+). Its pathway is secondary metabolite biosynthesis; flavonoid biosynthesis. Its function is as follows. Catalyzes the 3'-hydroxylation of the flavonoid B-ring to the 3',4'-hydroxylated state. Catalyzes in vitro 3'-hydroxylation of different flavonoids. Catalyzes the conversion of apigenin to luteolin, naringenin to eriodictyol, and kaempferol to quercetin. Possesses specific 5'-hydroxylase activity toward chrysoeriol (a 3'-methoxylated flavone) and is indispensable for tricin formation. Converts chrysoeriol to selgin, a precursor of tricin, suggesting that chrysoeriol, instead of tricetin, is an intermediate in tricin biosynthesis. In Oryza sativa subsp. japonica (Rice), this protein is Flavonoid 3'-monooxygenase CYP75B4.